Consider the following 220-residue polypeptide: Putative vesicle-associated membrane protein 726 (220 aa).

Residues 1–196 are Cytoplasmic-facing; sequence MGQQSLIYSF…LWFENMKIKL (196 aa). The Longin domain occupies 10–114; the sequence is FVARGTVILA…SLNKEFGSKL (105 aa). Positions 130–190 constitute a v-SNARE coiled-coil homology domain; sequence KLSKVKAQVT…TKMKRKLWFE (61 aa). The helical; Anchor for type IV membrane protein transmembrane segment at 197–217 threads the bilayer; that stretch reads IVFGIIVALILIIILSVCHGF. The Vesicular portion of the chain corresponds to 218–220; sequence KCT.

Belongs to the synaptobrevin family. In terms of tissue distribution, expressed in flowers, leaves, stems and roots.

Its subcellular location is the cell membrane. The protein localises to the early endosome membrane. Involved in the targeting and/or fusion of transport vesicles to their target membrane. The sequence is that of Putative vesicle-associated membrane protein 726 (VAMP726) from Arabidopsis thaliana (Mouse-ear cress).